We begin with the raw amino-acid sequence, 111 residues long: MFKATARYIRVQPRKARLAAGLMRNRSVVEAQQQLSFSQMKAGRCLKKVLDSAIANAESNENIKRENLCILEVRVDAGPMFKRMKSKSRGGRAPILKRTSHLTVIVGERGQ.

The protein belongs to the universal ribosomal protein uL22 family. As to quaternary structure, part of the 50S ribosomal subunit.

Functionally, this protein binds specifically to 23S rRNA; its binding is stimulated by other ribosomal proteins, e.g. L4, L17, and L20. It is important during the early stages of 50S assembly. It makes multiple contacts with different domains of the 23S rRNA in the assembled 50S subunit and ribosome. Its function is as follows. The globular domain of the protein is located near the polypeptide exit tunnel on the outside of the subunit, while an extended beta-hairpin is found that lines the wall of the exit tunnel in the center of the 70S ribosome. This Chlamydia trachomatis serovar L2b (strain UCH-1/proctitis) protein is Large ribosomal subunit protein uL22.